A 22-amino-acid chain; its full sequence is 2.39 kDa venom peptide (22 aa).

Post-translationally, contains 2 disulfide bonds. As to expression, expressed by the venom gland.

It is found in the secreted. In terms of biological role, not lethal to mice by intraperitoneal or intracerebroventricular injections in doses up to 100 micrograms. The polypeptide is 2.39 kDa venom peptide (Heterometrus spinifer (Asia giant forest scorpion)).